The primary structure comprises 851 residues: Alanine--tRNA ligase (851 aa).

Histidine 535, histidine 539, cysteine 637, and histidine 641 together coordinate Zn(2+).

The protein belongs to the class-II aminoacyl-tRNA synthetase family. Zn(2+) serves as cofactor.

The protein localises to the cytoplasm. The enzyme catalyses tRNA(Ala) + L-alanine + ATP = L-alanyl-tRNA(Ala) + AMP + diphosphate. Its function is as follows. Catalyzes the attachment of alanine to tRNA(Ala) in a two-step reaction: alanine is first activated by ATP to form Ala-AMP and then transferred to the acceptor end of tRNA(Ala). Also edits incorrectly charged Ser-tRNA(Ala) and Gly-tRNA(Ala) via its editing domain. The chain is Alanine--tRNA ligase from Acholeplasma laidlawii (strain PG-8A).